A 530-amino-acid chain; its full sequence is S-adenosylhomocysteine hydrolase-like protein 1 (530 aa).

Met-1 is modified (N-acetylmethionine). N-acetylserine is present on Ser-2. At Ser-2 the chain carries Phosphoserine. At Lys-40 the chain carries N6-acetyllysine. The interval 53-103 is disordered; the sequence is KFPTKTGRRSLSRSISQSSTDSYSSAASYTDSSDDEVSPREKQQTNSKGSS. Over residues 64 to 83 the composition is skewed to low complexity; that stretch reads SRSISQSSTDSYSSAASYTD. The PEST stretch occupies residues 65 to 92; it reads RSISQSSTDSYSSAASYTDSSDDEVSPR. A phosphoserine mark is found at Ser-68, Ser-71, Ser-74, Ser-77, and Ser-84. The interaction with BCL2L10 stretch occupies residues 138–201; that stretch reads QGEKPLAGAK…EAGVAVFAWK (64 aa). Positions 155, 229, 254, 284, and 288 each coordinate substrate. Positions 281 to 448 are NAD binding; it reads SVTKQKFDNL…EGRLLNLSCS (168 aa). NAD(+)-binding positions include 318-322, Glu-341, and Asn-376; that span reads GYGEV. The residue at position 391 (Ser-391) is a Phosphoserine. 397–399 contacts NAD(+); it reads MGH. The PDZ-binding stretch occupies residues 520 to 530; sequence NGPFKPNYYRY.

Belongs to the adenosylhomocysteinase family. In terms of assembly, forms multimers. Forms heteromultimers with AHCYL2 (via the C-terminal region). Interacts (when phosphorylated) with ITPR1 (when not phosphorylated); the interaction suppresses inositol 1,4,5-trisphosphate binding to ITPR1. Interacts with BCL2L10; this strengthens the interaction of AHCYL1 with ITPR1. Interacts with CFTR and SLC26A6; the interactions take place once AHCYL1 is released from ITPR1 and increase CFTR and SLC26A6 activities. Interacts with RRM1; in a phosphorylation- and (dATP)-dependent manner. Interacts (via PEST domain when phosphorylated) with SLC4A4 isoform 1 but not isoform 2; the interaction increases SLC4A4 isoform 1 activity. Interacts (when phosphorylated) with SLC9A3; the interaction is required for SLC9A3 apical location and activity. Interacts (when phosphorylated) with FIP1L1; the interaction is direct and associates AHCYL1 with the CPSF complex and RNA. Interacts with PAPOLA. Interacts with ZCCHC4. Interacts with AHCY. NAD(+) serves as cofactor. Post-translationally, phosphorylated at Ser/Thr residues between Ser-68 and Thr-72 in the PEST region: required for interaction with dATP-bound RRM1 and ITPR1. Phosphorylation at Ser-68 by PRKD1 and CAMK4 is required for further phosphorylations by CSNK1A1. Phosphorylation is induced by oxidative stress. Probably phosphorylated by CAMK2A; phosphorylation at Ser-68 may be required for interaction with SLC9A3. Dephosphorylated in response to apoptotic stress conditions which causes translocation of both AHCYL1 and BCL2L10 from mitochondria-associated endoplasmic reticulum membranes and promotes apoptosis. As to expression, expressed in dendritic cells.

Its subcellular location is the endoplasmic reticulum. The protein resides in the cytoplasm. The protein localises to the cytosol. It is found in the apical cell membrane. It localises to the microsome. Functionally, multifaceted cellular regulator which coordinates several essential cellular functions including regulation of epithelial HCO3(-) and fluid secretion, mRNA processing and DNA replication. Regulates ITPR1 sensitivity to inositol 1,4,5-trisphosphate, competing for the common binding site and acting as endogenous 'pseudoligand' whose inhibitory activity can be modulated by its phosphorylation status. Promotes the formation of contact points between the endoplasmic reticulum (ER) and mitochondria, facilitating transfer of Ca(2+) from the ER to mitochondria. Under normal cellular conditions, functions cooperatively with BCL2L10 to limit ITPR1-mediated Ca(2+) release but, under apoptotic stress conditions, dephosphorylated which promotes dissociation of both AHCYL1 and BCL2L10 from mitochondria-associated endoplasmic reticulum membranes, inhibits BCL2L10 interaction with ITPR1 and leads to increased Ca(2+) transfer to mitochondria which promotes apoptosis. In the pancreatic and salivary ducts, at resting state, attenuates inositol 1,4,5-trisphosphate-induced calcium release by interacting with ITPR1. When extracellular stimuli induce ITPR1 phosphorylation or inositol 1,4,5-trisphosphate production, dissociates from ITPR1 to interact with CFTR and SLC26A6, mediating their synergistic activation by calcium and cAMP that stimulates the epithelial secretion of electrolytes and fluid. Also activates basolateral SLC4A4 isoform 1 to coordinate fluid and HCO3(-) secretion. Inhibits the effect of STK39 on SLC4A4 and CFTR by recruiting PP1 phosphatase which activates SLC4A4, SLC26A6 and CFTR through dephosphorylation. Mediates the induction of SLC9A3 surface expression produced by Angiotensin-2. Depending on the cell type, activates SLC9A3 in response to calcium or reverses SLC9A3R2-dependent calcium inhibition. May modulate the polyadenylation state of specific mRNAs, both by controlling the subcellular location of FIP1L1 and by inhibiting PAPOLA activity, in response to a stimulus that alters its phosphorylation state. Acts as a (dATP)-dependent inhibitor of ribonucleotide reductase large subunit RRM1, controlling the endogenous dNTP pool and ensuring normal cell cycle progression. In vitro does not exhibit any S-adenosyl-L-homocysteine hydrolase activity. This chain is S-adenosylhomocysteine hydrolase-like protein 1, found in Homo sapiens (Human).